We begin with the raw amino-acid sequence, 427 residues long: Glutamate-1-semialdehyde 2,1-aminomutase (427 aa).

At lysine 265 the chain carries N6-(pyridoxal phosphate)lysine.

The protein belongs to the class-III pyridoxal-phosphate-dependent aminotransferase family. HemL subfamily. In terms of assembly, homodimer. Requires pyridoxal 5'-phosphate as cofactor.

The protein resides in the cytoplasm. The catalysed reaction is (S)-4-amino-5-oxopentanoate = 5-aminolevulinate. Its pathway is porphyrin-containing compound metabolism; protoporphyrin-IX biosynthesis; 5-aminolevulinate from L-glutamyl-tRNA(Glu): step 2/2. This Pseudomonas putida (strain W619) protein is Glutamate-1-semialdehyde 2,1-aminomutase.